The following is a 450-amino-acid chain: ATP-dependent protease ATPase subunit HslU (450 aa).

ATP-binding positions include valine 29, 71-76 (GVGKTE), aspartate 261, glutamate 328, and arginine 400.

Belongs to the ClpX chaperone family. HslU subfamily. As to quaternary structure, a double ring-shaped homohexamer of HslV is capped on each side by a ring-shaped HslU homohexamer. The assembly of the HslU/HslV complex is dependent on binding of ATP.

It localises to the cytoplasm. ATPase subunit of a proteasome-like degradation complex; this subunit has chaperone activity. The binding of ATP and its subsequent hydrolysis by HslU are essential for unfolding of protein substrates subsequently hydrolyzed by HslV. HslU recognizes the N-terminal part of its protein substrates and unfolds these before they are guided to HslV for hydrolysis. The protein is ATP-dependent protease ATPase subunit HslU of Rickettsia conorii (strain ATCC VR-613 / Malish 7).